A 948-amino-acid chain; its full sequence is ATPase 2, plasma membrane-type (948 aa).

S2 carries the N-acetylserine modification. Residues 2-61 (SSLEDIKNETVDLEKIPIEEVFQQLKCSREGLTTQEGEDRIQIFGPNKLEEKKESKLLKF) are Cytoplasmic-facing. The chain crosses the membrane as a helical span at residues 62–81 (LGFMWNPLSWVMEMAAIMAI). Residues 82–93 (ALANGDGRPPDW) lie on the Extracellular side of the membrane. Residues 94–114 (QDFVGIICLLVINSTISFIEE) traverse the membrane as a helical segment. Over 115-243 (NNAGNAAAAL…GHFQKVLTAI (129 aa)) the chain is Cytoplasmic. Residues 244–264 (GNFCICSIAIGMVIEIIVMYP) form a helical membrane-spanning segment. At 265 to 273 (IQRRKYRDG) the chain is on the extracellular side. Residues 274-291 (IDNLLVLLIGGIPIAMPT) traverse the membrane as a helical segment. Residues 292–643 (VLSVTMAIGS…TSRAIFQRMK (352 aa)) lie on the Cytoplasmic side of the membrane. Catalysis depends on D329, which acts as the 4-aspartylphosphate intermediate. The Mg(2+) site is built by D588 and D592. A helical transmembrane segment spans residues 644 to 665 (NYTIYAVSITIRIVFGFMLIAL). At 666–670 (IWEFD) the chain is on the extracellular side. The chain crosses the membrane as a helical span at residues 671–693 (FSAFMVLIIAILNDGTIMTISKD). At 694-709 (RVKPSPTPDSWKLKEI) the chain is on the cytoplasmic side. A helical transmembrane segment spans residues 710–730 (FATGVVLGGYQAIMTVIFFWA). Residues 731–751 (AHKTDFFSDTFGVRSIRDNNH) lie on the Extracellular side of the membrane. Residues 752–772 (ELMGAVYLQVSIISQALIFVT) traverse the membrane as a helical segment. Residues 773–784 (RSRSWSFVERPG) are Cytoplasmic-facing. Residues 785-805 (ALLMIAFLIAQLIATLIAVYA) form a helical membrane-spanning segment. The Extracellular portion of the chain corresponds to 806–813 (NWEFAKIR). The helical transmembrane segment at 814 to 834 (GIGWGWAGVIWLYSIVTYFPL) threads the bilayer. The Cytoplasmic segment spans residues 835 to 948 (DVFKFAIRYI…DIETPSHYTV (114 aa)). The residue at position 881 (T881) is a Phosphothreonine. Position 899 is a phosphoserine (S899). Phosphoserine; by CIPK11 is present on S931. The tract at residues 946–948 (YTV) is interaction with 14-3-3 proteins. The residue at position 947 (T947) is a Phosphothreonine.

Belongs to the cation transport ATPase (P-type) (TC 3.A.3) family. Type IIIA subfamily. Binds to 14-3-3 proteins. The binding is induced by phosphorylation of Thr-947 and it activates the H(+)-ATPase. Interacts (via the R-domain) with PSY1R (via C-terminus). Part of a functional complex containing PSKR1, BAK1, CNGC17, and AHA. Interacts with CNGC17 and PSKR1. Interacts with PP2C67/PP2C-D1 at the plasma membrane. Interacts with AHA1. In terms of processing, phosphorylated, probably by PHOT1 and PHOT2, at C-terminal Thr-947 in guard cells in response to blue light to induce stomatal opening. Post-translationally, phosphorylation at Thr-881 by PSY1R. This phosphorylation activates proton pumping. Decreased phosphorylation in response to flg22 elicitation. Phosphorylation at Ser-899 is specifically induced by RALF1, thus leading to the inhibition of proton transport. Increased phosphorylation in response to flg22 elicitation. In terms of processing, phosphorylation of Thr-947 induces the binding to 14-3-3 proteins, but phosphorylation of Ser-931 interferes with this binding no matter whether Thr-947 is phosphorylated or not. Decreased phosphorylation in response to flg22 elicitation. Phosphorylation of Thr-947 is enhanced by the presence of brassinolide (BL) via the BRI1-BIN2 pathway and prior the trigger of hypocotyl elongation. Inactivated by PP2C67/PP2C-D1-mediated Thr-947 dephosphorylation; SAUR19 inhibits the action of PP2C67/PP2C-D1 and thus promotes the active phosphorylated form. Post-translationally, abscisic acid induces dephosphorylation of AHA2 in etiolated seedlings, suppressing ATP hydrolysis and hypocotyl elongation. In terms of tissue distribution, higher levels in roots than in shoots. Expressed in epidermal and root cortex cells, in phloem, xylem and root hairs. Detected in cotyledons, leaves, hypocotyls, roots and root hairs. Expressed in guard cells and mesophyll cells.

Its subcellular location is the cell membrane. It catalyses the reaction ATP + H2O + H(+)(in) = ADP + phosphate + 2 H(+)(out). With respect to regulation, regulated by an auto-inhibitory C-terminal domain that can be displaced by phosphorylation of Thr-947 and the subsequent binding of 14-3-3 proteins. Negatively regulated by PKS5. PKS5 phosphorylates Ser-931, inhibiting interaction with the activating 14-3-3 protein. Positively regulated by PSY1R. PSY1R phosphorylates Thr-881, situated in the auto-inhibitory region I of the C-terminal domain, causing pump activation. Negatively regulated by the secreted peptide RALF. After specific binding to FERONIA, RALF causes phosphorylation at Ser-899, mediating the inhibition of proton transport. Activated by lysophospholipids, without the involvement of phosphorylation of Thr-947. This activation is critically dependent on the single autoinhibitory residue Leu-919. Repressed by PP2C-D phosphatases (e.g. PP2C67/PP2C-D1 and PP2C64/PP2C-D5) which dephosphorylates Thr-947. Triggered by SAUR19 via phosphorylation of the C-terminal autoinhibitory domain (e.g. Thr-947), as a result of the inhibition of PP2C67/PP2C-D1. Phosphorylation on Thr residues is repressed by tyrphostin 9, sphingosine, GW5074 and BML-265. By contrast, the fungal phytotoxin fusicoccin (FC) promotes phosphorylation of Thr-947 independently to BHP, thus leading to large stomatal opening. The plasma membrane H(+) ATPase of plants and fungi generates a proton gradient that drives the active transport of nutrients by H(+)-symport. The resulting external acidification and/or internal alkinization may mediate growth responses. Involved in maintaining the membrane potential and delta-pH, together forming the plasma membrane protonmotive force (PMF) required for root and hypocotyl elongation and root tropism. Important for root growth and development during different nitrogen regimes. Forms a functional cation-translocating unit with CNGC17 that is activated by PSKR1/BAK1 and possibly other BAK1/RLK complexes. Promotes stomatal opening in response to blue light. This Arabidopsis thaliana (Mouse-ear cress) protein is ATPase 2, plasma membrane-type.